The primary structure comprises 108 residues: MKKMMTFLKKAKVKAFTLVEMLVVLLIISVLFLLFVPNLTKQKEAVNDKGKAAVVKVVESQAELYSLEKNEDASLRKLQADGRITEEQAKAYKEYNDKNGGANRKVND.

The signal sequence occupies residues 1-13 (MKKMMTFLKKAKV). Residues 14–39 (KAFTLVEMLVVLLIISVLFLLFVPNL) are may be involved in polymerization of ComGC. At phenylalanine 16 the chain carries N-methylphenylalanine. Residues 16–36 (FTLVEMLVVLLIISVLFLLFV) traverse the membrane as a helical segment.

This sequence belongs to the ComGC family. In terms of assembly, the transformation pili are flexible filaments, consisting mainly of the major pilin ComGC and smaller amounts of the minor pilins, including at least ComGD, ComGF and ComGG, and perhaps ComGE. Homodimer. Forms higher-order multimers. Interacts with ComGG; the interaction is probably direct. Post-translationally, undergoes proteolytic cleavage.

The protein resides in the cell membrane. Its subcellular location is the cell surface. The protein localises to the fimbrium. It is found in the secreted. Major component of the type IV-like pilus (T4P) that plays a role in transformation. Transformation pili are dynamically extended and retracted, perhaps thereby promoting DNA uptake and transformation. Required for transformation. Required for DNA binding. The polypeptide is Competence protein ComGC (Streptococcus pneumoniae serotype 4 (strain ATCC BAA-334 / TIGR4)).